A 272-amino-acid polypeptide reads, in one-letter code: Formamidopyrimidine-DNA glycosylase (272 aa).

Catalysis depends on Pro-2, which acts as the Schiff-base intermediate with DNA. Glu-3 functions as the Proton donor in the catalytic mechanism. Catalysis depends on Lys-58, which acts as the Proton donor; for beta-elimination activity. Positions 92, 111, and 153 each coordinate DNA. The segment at 238–272 adopts an FPG-type zinc-finger fold; that stretch reads NVYGRGGEPCPVCAKPLTEKPLSQRTTVYCTHCQN. Catalysis depends on Arg-262, which acts as the Proton donor; for delta-elimination activity.

The protein belongs to the FPG family. As to quaternary structure, monomer. Requires Zn(2+) as cofactor.

The catalysed reaction is Hydrolysis of DNA containing ring-opened 7-methylguanine residues, releasing 2,6-diamino-4-hydroxy-5-(N-methyl)formamidopyrimidine.. It catalyses the reaction 2'-deoxyribonucleotide-(2'-deoxyribose 5'-phosphate)-2'-deoxyribonucleotide-DNA = a 3'-end 2'-deoxyribonucleotide-(2,3-dehydro-2,3-deoxyribose 5'-phosphate)-DNA + a 5'-end 5'-phospho-2'-deoxyribonucleoside-DNA + H(+). In terms of biological role, involved in base excision repair of DNA damaged by oxidation or by mutagenic agents. Acts as a DNA glycosylase that recognizes and removes damaged bases. Has a preference for oxidized purines, such as 7,8-dihydro-8-oxoguanine (8-oxoG). Has AP (apurinic/apyrimidinic) lyase activity and introduces nicks in the DNA strand. Cleaves the DNA backbone by beta-delta elimination to generate a single-strand break at the site of the removed base with both 3'- and 5'-phosphates. The polypeptide is Formamidopyrimidine-DNA glycosylase (Teredinibacter turnerae (strain ATCC 39867 / T7901)).